The chain runs to 200 residues: Golgi to ER traffic protein 1 (200 aa).

Residues 1 to 6 (MEPYTL) are Lumenal-facing. The helical transmembrane segment at 7–26 (LLFIFVIQIVKQIISAVGKQ) threads the bilayer. The Cytoplasmic portion of the chain corresponds to 27–113 (SIESISWVLY…KVNTFTGYLI (87 aa)). The stretch at 75–107 (AKWTKLNRQHDKLVAEIEQLQKEVDLDKVKVNT) forms a coiled coil. A helical membrane pass occupies residues 114–134 (AILTSIPIWFFRVWYRSVVLF). Residues 135–158 (YFPPGILPRALEWSIALPFTVTGG) are Lumenal-facing. The chain crosses the membrane as a helical span at residues 159–175 (VSLTVWMMAAGAVASSL). Residues 176–200 (TFLFMFPFEKAVPKPVLAKKSPQQL) lie on the Cytoplasmic side of the membrane.

This sequence belongs to the WRB/GET1 family. As to quaternary structure, component of the Golgi to ER traffic (GET) complex, which is composed of GET1, GET2 and GET3. Within the complex, GET1 and GET2 form a heterotetramer which is stabilized by phosphatidylinositol binding and which binds to the GET3 homodimer.

It is found in the endoplasmic reticulum membrane. The protein resides in the golgi apparatus membrane. In terms of biological role, required for the post-translational delivery of tail-anchored (TA) proteins to the endoplasmic reticulum. Together with GET2, acts as a membrane receptor for soluble GET3, which recognizes and selectively binds the transmembrane domain of TA proteins in the cytosol. The GET complex cooperates with the HDEL receptor ERD2 to mediate the ATP-dependent retrieval of resident ER proteins that contain a C-terminal H-D-E-L retention signal from the Golgi to the ER. In Meyerozyma guilliermondii (strain ATCC 6260 / CBS 566 / DSM 6381 / JCM 1539 / NBRC 10279 / NRRL Y-324) (Yeast), this protein is Golgi to ER traffic protein 1.